The primary structure comprises 107 residues: MMTESEFIRASEALFEHIEDQIDENGWDFDCRFAGNVLTIEAGDGTQIIVNRHTPNQELWIAAKSGGYHFAEQNGKWLATRDSRDFYDVLNEALSAASGEAVEIEEL.

The protein belongs to the frataxin family.

Involved in iron-sulfur (Fe-S) cluster assembly. May act as a regulator of Fe-S biogenesis. This chain is Iron-sulfur cluster assembly protein CyaY, found in Neisseria meningitidis serogroup C / serotype 2a (strain ATCC 700532 / DSM 15464 / FAM18).